Consider the following 414-residue polypeptide: TAR DNA-binding protein 43 (414 aa).

Glycyl lysine isopeptide (Lys-Gly) (interchain with G-Cter in SUMO2) cross-links involve residues lysine 79, lysine 84, lysine 95, lysine 102, and lysine 181. 2 RRM domains span residues 104-200 and 191-262; these read SDLI…RCTE and RKVF…NAEP. Position 183 is a phosphoserine (serine 183). The interaction with UBQLN2 stretch occupies residues 216 to 414; sequence EVVDVFIPKP…MDSKSSGWGM (199 aa). A compositionally biased stretch (basic and acidic residues) spans 261–274; it reads EPKHNSNRQLERSG. Disordered regions lie at residues 261–301 and 341–414; these read EPKH…GLGN and ASQQ…GWGM. A Glycyl lysine isopeptide (Lys-Gly) (interchain with G-Cter in SUMO2) cross-link involves residue lysine 263. Positions 275–301 are enriched in gly residues; sequence RFGGNPGGFGNQGGFGNSRGGGAGLGN. Residue serine 292 is modified to Phosphoserine. Residue arginine 293 is modified to Omega-N-methylarginine. Composition is skewed to low complexity over residues 342 to 358 and 368 to 392; these read SQQNQSGPSGNNQSQGS and GSGNNSYSGSNSGAPLGWGSASNAG. Over residues 393 to 402 the composition is skewed to gly residues; that stretch reads SGSGFNGGFG. The span at 405–414 shows a compositional bias: polar residues; that stretch reads MDSKSSGWGM.

Homodimer. Homooligomer (via its N-terminal domain). Interacts with BRDT. Binds specifically to pyrimidine-rich motifs of TAR DNA and to single stranded TG repeated sequences. Binds to RNA, specifically to UG repeated sequences with a minimum of six contiguous repeats. Interacts with ATXN2; the interaction is RNA-dependent. Interacts with MATR3. Interacts with UBQLN2. Interacts with HNRNPA2B1. Interacts with ZNF106. Interacts with CNOT7/CAF1. Interacts with CRY2. Interacts with PPIA/CYPA; the interaction is dependent on RNA-binding activity of TARDBP and PPIase activity of PPIA/CYPA. Acetylation of PPIA/CYPA at 'Lys-125' favors the interaction of TARDBP with PPIA/CYPA. In terms of processing, hyperphosphorylated. Post-translationally, ubiquitinated.

Its subcellular location is the nucleus. It is found in the cytoplasm. The protein resides in the stress granule. It localises to the mitochondrion. Functionally, RNA-binding protein that is involved in various steps of RNA biogenesis and processing. Preferentially binds, via its two RNA recognition motifs RRM1 and RRM2, to GU-repeats on RNA molecules predominantly localized within long introns and in the 3'UTR of mRNAs. In turn, regulates the splicing of many non-coding and protein-coding RNAs including proteins involved in neuronal survival, as well as mRNAs that encode proteins relevant for neurodegenerative diseases. Plays a role in maintaining mitochondrial homeostasis by regulating the processing of mitochondrial transcripts. Also regulates mRNA stability by recruiting CNOT7/CAF1 deadenylase on mRNA 3'UTR leading to poly(A) tail deadenylation and thus shortening. In response to oxidative insult, associates with stalled ribosomes localized to stress granules (SGs) and contributes to cell survival. Also participates in the normal skeletal muscle formation and regeneration, forming cytoplasmic myo-granules and binding mRNAs that encode sarcomeric proteins. Plays a role in the maintenance of the circadian clock periodicity via stabilization of the CRY1 and CRY2 proteins in a FBXL3-dependent manner. Negatively regulates the expression of CDK6. Regulates the expression of HDAC6, ATG7 and VCP in a PPIA/CYPA-dependent manner. This Mus musculus (Mouse) protein is TAR DNA-binding protein 43 (Tardbp).